Reading from the N-terminus, the 235-residue chain is UPF0173 metal-dependent hydrolase Oant_3663 (235 aa).

The protein belongs to the UPF0173 family.

This is UPF0173 metal-dependent hydrolase Oant_3663 from Brucella anthropi (strain ATCC 49188 / DSM 6882 / CCUG 24695 / JCM 21032 / LMG 3331 / NBRC 15819 / NCTC 12168 / Alc 37) (Ochrobactrum anthropi).